A 540-amino-acid polypeptide reads, in one-letter code: Probable G-protein coupled receptor 75 (540 aa).

Residues 1-46 (MNTSAPLQNVPNATLLNMPPLHGGNSTSLQEGLRDFIHTATLVTCT) are Extracellular-facing. Residues Asn2 and Asn25 are each glycosylated (N-linked (GlcNAc...) asparagine). Residues 47–67 (FLLAIIFCLGSYGNFIVFLSF) traverse the membrane as a helical segment. At 68–86 (FDPSFRKFRTNFDFMILNL) the chain is on the cytoplasmic side. The chain crosses the membrane as a helical span at residues 87 to 107 (SFCDLFICGVTAPMFTFVLFF). Over 108 to 120 (SSASSIPDSFCFT) the chain is Extracellular. The helical transmembrane segment at 121-141 (FHLTSSGFVIMSLKMVAVIAL) threads the bilayer. Residues 142–160 (HRLRMVMGKQPNCTASFSC) are Cytoplasmic-facing. The helical transmembrane segment at 161-181 (ILLLTLLLWATSFTLATLATL) threads the bilayer. At 182–205 (RTNKSHLCLPMSSLMDGEGKAILS) the chain is on the extracellular side. N-linked (GlcNAc...) asparagine glycosylation occurs at Asn184. A helical transmembrane segment spans residues 206–226 (LYVVDFTFCVAVVSVSYIMIA). The Cytoplasmic portion of the chain corresponds to 227-318 (QTLRKNAQVK…INFSTAKDSK (92 aa)). The helical transmembrane segment at 319–339 (AVVTCVVIVLSVLVCCLPLGI) threads the bilayer. Over 340–350 (SLVQMVLSDNG) the chain is Extracellular. The chain crosses the membrane as a helical span at residues 351–371 (SFILYQFELFGFTLIFFKSGL). Residues 372–540 (NPFIYSRNSA…SAKQIPIPSV (169 aa)) lie on the Cytoplasmic side of the membrane. The segment at 443–475 (DQACGPSHSKESAASPKVSAGHQPCGQSSSTPI) is disordered.

The protein belongs to the G-protein coupled receptor 1 family. As to expression, highly expressed in brain and heart. Also detected in skeletal muscle, liver and kidney. Also expressed by islet cells (at protein level).

The protein resides in the cell membrane. Its function is as follows. G protein-coupled receptor that is activated by the chemokine CCL5/RANTES. Probably coupled to heterotrimeric Gq proteins, it stimulates inositol trisphosphate production and calcium mobilization upon activation. Together with CCL5/RANTES, may play a role in neuron survival through activation of a downstream signaling pathway involving the PI3, Akt and MAP kinases. CCL5/RANTES may also regulate insulin secretion by pancreatic islet cells through activation of this receptor. In Mus musculus (Mouse), this protein is Probable G-protein coupled receptor 75 (Gpr75).